The primary structure comprises 185 residues: Hypoxanthine/guanine phosphoribosyltransferase (185 aa).

It belongs to the purine/pyrimidine phosphoribosyltransferase family. Archaeal HPRT subfamily. As to quaternary structure, homodimer.

Its subcellular location is the cytoplasm. It catalyses the reaction IMP + diphosphate = hypoxanthine + 5-phospho-alpha-D-ribose 1-diphosphate. It carries out the reaction GMP + diphosphate = guanine + 5-phospho-alpha-D-ribose 1-diphosphate. It participates in purine metabolism; IMP biosynthesis via salvage pathway; IMP from hypoxanthine: step 1/1. Catalyzes a salvage reaction resulting in the formation of IMP that is energically less costly than de novo synthesis. The sequence is that of Hypoxanthine/guanine phosphoribosyltransferase (hpt) from Methanococcus maripaludis (strain DSM 14266 / JCM 13030 / NBRC 101832 / S2 / LL).